We begin with the raw amino-acid sequence, 391 residues long: DNA-directed RNA polymerase subunit Rpo1C (391 aa).

The protein belongs to the RNA polymerase beta' chain family. Part of the RNA polymerase complex.

Its subcellular location is the cytoplasm. It catalyses the reaction RNA(n) + a ribonucleoside 5'-triphosphate = RNA(n+1) + diphosphate. Its function is as follows. DNA-dependent RNA polymerase (RNAP) catalyzes the transcription of DNA into RNA using the four ribonucleoside triphosphates as substrates. Forms part of the jaw domain. In Thermococcus gammatolerans (strain DSM 15229 / JCM 11827 / EJ3), this protein is DNA-directed RNA polymerase subunit Rpo1C.